The chain runs to 675 residues: Methionine--tRNA ligase (675 aa).

The short motif at 15 to 25 (PYANGPIHLGH) is the 'HIGH' region element. Zn(2+) is bound by residues C146, C149, C159, and C162. Residues 332–336 (KMSKS) carry the 'KMSKS' region motif. Residue K335 coordinates ATP. The region spanning 574 to 675 (DFAKIDLRVA…AGAKPGMRVK (102 aa)) is the tRNA-binding domain.

This sequence belongs to the class-I aminoacyl-tRNA synthetase family. MetG type 1 subfamily. As to quaternary structure, homodimer. Requires Zn(2+) as cofactor.

The protein resides in the cytoplasm. It carries out the reaction tRNA(Met) + L-methionine + ATP = L-methionyl-tRNA(Met) + AMP + diphosphate. Its function is as follows. Is required not only for elongation of protein synthesis but also for the initiation of all mRNA translation through initiator tRNA(fMet) aminoacylation. The polypeptide is Methionine--tRNA ligase (Shewanella amazonensis (strain ATCC BAA-1098 / SB2B)).